The following is a 526-amino-acid chain: Trigger factor (526 aa).

The PPIase FKBP-type domain occupies 162–243 (GDFVSIDLSA…LGSVKERELP (82 aa)). A compositionally biased stretch (basic and acidic residues) spans 425-460 (DTDGADVDPKEYFGDVEAEGDKADKAETDKAEEKPK). The tract at residues 425–526 (DTDGADVDPK…AKKAAEKKED (102 aa)) is disordered. The segment covering 461–517 (KAPAKKSTTKKSTAKKSTAKKSTAKKSTAKKSTAKKSTTKKATKSTAKKSTAKKTTA) has biased composition (basic residues).

Belongs to the FKBP-type PPIase family. Tig subfamily.

The protein resides in the cytoplasm. It carries out the reaction [protein]-peptidylproline (omega=180) = [protein]-peptidylproline (omega=0). In terms of biological role, involved in protein export. Acts as a chaperone by maintaining the newly synthesized protein in an open conformation. Functions as a peptidyl-prolyl cis-trans isomerase. This Corynebacterium jeikeium (strain K411) protein is Trigger factor.